The primary structure comprises 217 residues: Uracil-DNA glycosylase (217 aa).

Residue Asp-62 is the Proton acceptor of the active site.

Belongs to the uracil-DNA glycosylase (UDG) superfamily. UNG family.

It is found in the cytoplasm. The catalysed reaction is Hydrolyzes single-stranded DNA or mismatched double-stranded DNA and polynucleotides, releasing free uracil.. Excises uracil residues from the DNA which can arise as a result of misincorporation of dUMP residues by DNA polymerase or due to deamination of cytosine. In Streptococcus pyogenes serotype M6 (strain ATCC BAA-946 / MGAS10394), this protein is Uracil-DNA glycosylase.